The chain runs to 361 residues: Ribosomal RNA large subunit methyltransferase M (361 aa).

Residues Ser-187, 220–223 (CPGG), Asp-239, Asp-259, and Asp-276 each bind S-adenosyl-L-methionine. The active-site Proton acceptor is Lys-305.

It belongs to the class I-like SAM-binding methyltransferase superfamily. RNA methyltransferase RlmE family. RlmM subfamily. Monomer.

The protein localises to the cytoplasm. The enzyme catalyses cytidine(2498) in 23S rRNA + S-adenosyl-L-methionine = 2'-O-methylcytidine(2498) in 23S rRNA + S-adenosyl-L-homocysteine + H(+). Catalyzes the 2'-O-methylation at nucleotide C2498 in 23S rRNA. The protein is Ribosomal RNA large subunit methyltransferase M of Shewanella oneidensis (strain ATCC 700550 / JCM 31522 / CIP 106686 / LMG 19005 / NCIMB 14063 / MR-1).